The following is a 763-amino-acid chain: Phosphoglycerol transferase I (763 aa).

A run of 4 helical transmembrane segments spans residues 1 to 21 (MSEL…AWKA), 26 to 46 (WWFA…ITLY), 77 to 97 (ILPG…LGWV), and 108 to 128 (FGYS…SPAF).

Belongs to the OpgB family.

The protein resides in the cell inner membrane. It carries out the reaction a phosphatidylglycerol + a membrane-derived-oligosaccharide D-glucose = a 1,2-diacyl-sn-glycerol + a membrane-derived-oligosaccharide 6-(glycerophospho)-D-glucose.. The protein operates within glycan metabolism; osmoregulated periplasmic glucan (OPG) biosynthesis. Transfers a phosphoglycerol residue from phosphatidylglycerol to the membrane-bound nascent glucan backbones. The protein is Phosphoglycerol transferase I of Citrobacter koseri (strain ATCC BAA-895 / CDC 4225-83 / SGSC4696).